Here is a 227-residue protein sequence, read N- to C-terminus: Isopentenyl-diphosphate delta-isomerase 2 (227 aa).

K36 is a substrate binding site. Residues H40 and H51 each contribute to the Mg(2+) site. The 151-residue stretch at 49–199 (LLHRAFSVVL…EVKVTPWLRT (151 aa)) folds into the Nudix hydrolase domain. Substrate is bound by residues R70 and K74. The active site involves S86. S87 lines the substrate pocket. Positions 146 and 148 each coordinate Mg(2+). E148 is an active-site residue. The short motif at 225–227 (HRV) is the Microbody targeting signal element.

It belongs to the IPP isomerase type 1 family. It depends on Mg(2+) as a cofactor. As to expression, muscle-specific expression.

The protein localises to the peroxisome. It catalyses the reaction isopentenyl diphosphate = dimethylallyl diphosphate. It participates in isoprenoid biosynthesis; dimethylallyl diphosphate biosynthesis; dimethylallyl diphosphate from isopentenyl diphosphate: step 1/1. Catalyzes the 1,3-allylic rearrangement of the homoallylic substrate isopentenyl (IPP) to its highly electrophilic allylic isomer, dimethylallyl diphosphate (DMAPP). In Homo sapiens (Human), this protein is Isopentenyl-diphosphate delta-isomerase 2 (IDI2).